The following is a 285-amino-acid chain: Pantothenate synthetase (285 aa).

An ATP-binding site is contributed by 30–37 (MGNLHDGH). Residue His-37 is the Proton donor of the active site. Gln-61 is a binding site for (R)-pantoate. A beta-alanine-binding site is contributed by Gln-61. 149–152 (GEKD) is a binding site for ATP. Gln-155 contacts (R)-pantoate. Residues Ile-178 and 186–189 (LSSR) contribute to the ATP site.

The protein belongs to the pantothenate synthetase family. As to quaternary structure, homodimer.

It is found in the cytoplasm. The enzyme catalyses (R)-pantoate + beta-alanine + ATP = (R)-pantothenate + AMP + diphosphate + H(+). The protein operates within cofactor biosynthesis; (R)-pantothenate biosynthesis; (R)-pantothenate from (R)-pantoate and beta-alanine: step 1/1. In terms of biological role, catalyzes the condensation of pantoate with beta-alanine in an ATP-dependent reaction via a pantoyl-adenylate intermediate. This chain is Pantothenate synthetase, found in Buchnera aphidicola subsp. Acyrthosiphon pisum (strain Tuc7).